Here is a 157-residue protein sequence, read N- to C-terminus: Ribosome maturation factor RimP (157 aa).

This sequence belongs to the RimP family.

Its subcellular location is the cytoplasm. Its function is as follows. Required for maturation of 30S ribosomal subunits. This chain is Ribosome maturation factor RimP, found in Thermobifida fusca (strain YX).